Reading from the N-terminus, the 156-residue chain is Small ribosomal subunit protein uS7 (156 aa).

It belongs to the universal ribosomal protein uS7 family. In terms of assembly, part of the 30S ribosomal subunit. Contacts proteins S9 and S11.

Functionally, one of the primary rRNA binding proteins, it binds directly to 16S rRNA where it nucleates assembly of the head domain of the 30S subunit. Is located at the subunit interface close to the decoding center, probably blocks exit of the E-site tRNA. The polypeptide is Small ribosomal subunit protein uS7 (Paracoccus denitrificans (strain Pd 1222)).